Here is a 307-residue protein sequence, read N- to C-terminus: Malate dehydrogenase (307 aa).

NAD(+)-binding positions include 8–13 (GAGNVG) and Asp-32. Substrate-binding residues include Arg-81 and Arg-87. NAD(+) contacts are provided by residues Asn-94 and 117–119 (VSN). The substrate site is built by Asn-119 and Arg-150. The Proton acceptor role is filled by His-174.

This sequence belongs to the LDH/MDH superfamily. MDH type 3 family.

It catalyses the reaction (S)-malate + NAD(+) = oxaloacetate + NADH + H(+). In terms of biological role, catalyzes the reversible oxidation of malate to oxaloacetate. In Dehalococcoides mccartyi (strain ATCC BAA-2100 / JCM 16839 / KCTC 5957 / BAV1), this protein is Malate dehydrogenase.